A 444-amino-acid polypeptide reads, in one-letter code: Ribulose bisphosphate carboxylase (444 aa).

Lys-163 serves as the catalytic Proton acceptor. Lys-165 contributes to the substrate binding site. Mg(2+) contacts are provided by Lys-189, Asp-191, and Glu-192. Position 189 is an N6-carboxylysine (Lys-189). Catalysis depends on His-281, which acts as the Proton acceptor. Substrate contacts are provided by residues Arg-282, His-314, 367–369, and 389–392; these read SGG and QLGG.

This sequence belongs to the RuBisCO large chain family. Type III subfamily. In terms of assembly, homodecamer, consisting of five dimer units which form a ring-like pentagonal structure. This arrangement is essential for its high thermostability. In contrast to form I RuBisCO, the form III RuBisCO is composed solely of large subunits. The cofactor is Mg(2+).

It carries out the reaction 2 (2R)-3-phosphoglycerate + 2 H(+) = D-ribulose 1,5-bisphosphate + CO2 + H2O. The enzyme catalyses D-ribulose 1,5-bisphosphate + O2 = 2-phosphoglycolate + (2R)-3-phosphoglycerate + 2 H(+). Functionally, catalyzes the addition of molecular CO(2) and H(2)O to ribulose 1,5-bisphosphate (RuBP), generating two molecules of 3-phosphoglycerate (3-PGA). Functions in an archaeal AMP degradation pathway, together with AMP phosphorylase and R15P isomerase. In Thermococcus kodakarensis (strain ATCC BAA-918 / JCM 12380 / KOD1) (Pyrococcus kodakaraensis (strain KOD1)), this protein is Ribulose bisphosphate carboxylase.